A 206-amino-acid chain; its full sequence is Glutathione S-transferase 1 (206 aa).

Positions 2-79 constitute a GST N-terminal domain; that stretch reads PQYKLTYFDI…YLGRQFGLAG (78 aa). Residues Tyr8, Trp39, Lys43, 49-51, and 63-64 each bind glutathione; these read GQL and QS. Residues 81–206 form the GST C-terminal domain; that stretch reads TPMEEAQVDS…WIAERPKTPY (126 aa).

This sequence belongs to the GST superfamily. Sigma family.

It carries out the reaction RX + glutathione = an S-substituted glutathione + a halide anion + H(+). Its function is as follows. Conjugation of reduced glutathione to a wide number of exogenous and endogenous hydrophobic electrophiles. Can also function as a GSH peroxidase. The sequence is that of Glutathione S-transferase 1 (GST1) from Ascaris suum (Pig roundworm).